The following is a 269-amino-acid chain: MSIPAFTVVIPARLASTRLPNKPLADIGGHPMIVRVAERAHASSAQRTVVATDAPAVAEACAAHGIDAVLTRADHPSGTDRLAEVAAQLALPDDAIVVNVQGDEPLIDPQLIDDVAMHLAHHADCAIATAAHALHDVAEVFNPNVVKVVCDAGGRALYFSRAPIPWSRDDWAGVPAVPASAAQVPLPAMPVLRHIGLYAYRAGFLRRFPTMAAAPLEQTEALEQLRAMWHGERIAVLETAAAPAPGVDTAADLERVRALWAQGMAQEGP.

It belongs to the KdsB family.

Its subcellular location is the cytoplasm. It carries out the reaction 3-deoxy-alpha-D-manno-oct-2-ulosonate + CTP = CMP-3-deoxy-beta-D-manno-octulosonate + diphosphate. It participates in nucleotide-sugar biosynthesis; CMP-3-deoxy-D-manno-octulosonate biosynthesis; CMP-3-deoxy-D-manno-octulosonate from 3-deoxy-D-manno-octulosonate and CTP: step 1/1. Its pathway is bacterial outer membrane biogenesis; lipopolysaccharide biosynthesis. In terms of biological role, activates KDO (a required 8-carbon sugar) for incorporation into bacterial lipopolysaccharide in Gram-negative bacteria. The protein is 3-deoxy-manno-octulosonate cytidylyltransferase of Cupriavidus pinatubonensis (strain JMP 134 / LMG 1197) (Cupriavidus necator (strain JMP 134)).